The chain runs to 109 residues: Protein GOLVEN 5 (109 aa).

The N-terminal stretch at 1–24 is a signal peptide; it reads MTNITSSFLCLLILLLFCLSFGYS. Residues 25–96 constitute a propeptide that is removed on maturation; that stretch reads LHGDKDEVLS…EEDDLVAYTA (72 aa). Positions 54-88 are disordered; sequence KKAQVRGRSGQEFSKETTKMMMKKTTKKETNVEEE. A Sulfotyrosine modification is found at Tyr98. Pro106 is subject to Hydroxyproline.

This sequence belongs to the RGF family. In terms of assembly, binds to LRR receptor-like serine/threonine-protein kinases RGI1, RGI2 and RGI3 to trigger their dimerization with SERK proteins and subsequent signaling. As to expression, expressed in root tips.

It localises to the secreted. Functionally, signaling peptide (root growth factor) that maintains the postembryonic root stem cell niche in a PIN2-traffic dependent manner. Root growth factor that regulates the pattern of root growth and lateral root development by modulating the length and the number of cortical cells in the root apical meristem (RAM), and the anticlinal asymmetric cell divisions in lateral root initiation cells. Influences the longitudinal growth rate in the primary root in response to phosphate ion (Pi)-deprivation. This is Protein GOLVEN 5 from Arabidopsis thaliana (Mouse-ear cress).